The primary structure comprises 580 residues: MGEKAVPLLRRRRVKRSCPSCGSELGVEEKRGKGNPISIQLFPPELVEHIISFLPVRDLVALGQTCRYFHEVCDGEGVWRRICRRLSPRLQDQGSGVRPWKRAAILNYTKGLYFQAFGGRRRCLSKSVAPLLAHGYRRFLPTKDHVFILDYVGTLFFLKNALVSTLGQMQWKRACRYVVLCRGAKDFASDPRCDTVYRKYLYVLATREPQEVVGTTSSRACDCVEVYLQSSGQRVFKMTFHHSMTFKQIVLVGQETQRALLLLTEEGKIYSLVVNETQLDQPRSYTVQLALRKVSHYLPHLRVACMTSNQSSTLYVTDQGGVYFEVHTPGVYRDLFGTLQAFDPLDQQMPLALSLPAKILFCALGYNHLGLVDEFGRIFMQGNNRYGQLGTGDKMDRGEPTQVCYLQRPITLWCGLNHSLVLSQSSEFSKELLGCGCGAGGRLPGWPKGSASFVKLQVKVPLCACALCATRECLYILSSHDIEQHAPYRHLPASRVVGTPEPSLGARAPQDPGGMAQACEEYLSQIHSCQTLQDRTEKMKEIVGWMPLMAAQKDFFWEALDMLQRAEGGGGGVGPPAPET.

The F-box domain occupies 36–82; sequence PISIQLFPPELVEHIISFLPVRDLVALGQTCRYFHEVCDGEGVWRRI. Residues 376–425 form an RCC1 repeat; sequence GRIFMQGNNRYGQLGTGDKMDRGEPTQVCYLQRPITLWCGLNHSLVLSQS.

Directly interacts with SKP1 and CUL1.

Substrate-recognition component of the SCF (SKP1-CUL1-F-box protein)-type E3 ubiquitin ligase complex. This Homo sapiens (Human) protein is F-box only protein 24 (FBXO24).